A 173-amino-acid polypeptide reads, in one-letter code: Adenine phosphoribosyltransferase (173 aa).

The protein belongs to the purine/pyrimidine phosphoribosyltransferase family. Homodimer.

It localises to the cytoplasm. It catalyses the reaction AMP + diphosphate = 5-phospho-alpha-D-ribose 1-diphosphate + adenine. The protein operates within purine metabolism; AMP biosynthesis via salvage pathway; AMP from adenine: step 1/1. Functionally, catalyzes a salvage reaction resulting in the formation of AMP, that is energically less costly than de novo synthesis. The sequence is that of Adenine phosphoribosyltransferase from Caldanaerobacter subterraneus subsp. tengcongensis (strain DSM 15242 / JCM 11007 / NBRC 100824 / MB4) (Thermoanaerobacter tengcongensis).